The chain runs to 131 residues: Large-conductance mechanosensitive channel (131 aa).

3 consecutive transmembrane segments (helical) span residues 14–34 (IMDL…VTSL), 38–58 (IIMP…LAVT), and 67–87 (GSFI…FIVI).

Belongs to the MscL family. As to quaternary structure, homopentamer.

The protein resides in the cell membrane. Its function is as follows. Channel that opens in response to stretch forces in the membrane lipid bilayer. May participate in the regulation of osmotic pressure changes within the cell. The chain is Large-conductance mechanosensitive channel from Bacillus velezensis (strain DSM 23117 / BGSC 10A6 / LMG 26770 / FZB42) (Bacillus amyloliquefaciens subsp. plantarum).